Here is a 317-residue protein sequence, read N- to C-terminus: Melanocyte-stimulating hormone receptor (317 aa).

The Extracellular portion of the chain corresponds to 1–37; sequence MAVQGFQRRLLGSLNSTPTAIPQLGLAANQTGARCLE. Asn29 is a glycosylation site (N-linked (GlcNAc...) asparagine). A helical transmembrane segment spans residues 38 to 63; it reads VSIPDGLFLSLGLVSLVENVLVVATI. Residues 64 to 72 lie on the Cytoplasmic side of the membrane; it reads AKNRNLHSP. Residues 73-93 traverse the membrane as a helical segment; sequence TYCFICCLALSDLLVSGGNVL. Residues 94-118 are Extracellular-facing; it reads ETVVILLLEASALAARAAVVQPLDN. A helical membrane pass occupies residues 119 to 140; that stretch reads VIDVITCSSMVSSLCFLGAIAV. Residues 141 to 163 lie on the Cytoplasmic side of the membrane; it reads DRYVSIFYALRYHSIVTLPRARQ. The chain crosses the membrane as a helical span at residues 164 to 183; sequence AIAAIWVASVLFSTLFIAYY. Residues 184-191 are Extracellular-facing; sequence DHAAVLLC. Residues 192-211 form a helical membrane-spanning segment; sequence LVVFFLAMLVXMAVLYVHML. Topologically, residues 212–240 are cytoplasmic; it reads ARACQHAQGIARLHKRQRPLHQGFGLKGA. Residues 241 to 266 form a helical membrane-spanning segment; sequence VTLTILLGIFFLCWGPFFLHLTLIVL. The Extracellular segment spans residues 267 to 279; the sequence is CPQHPTCSCIFKN. A helical membrane pass occupies residues 280 to 300; the sequence is FNLFLTLIICNAIIDPLIYAF. At 301-317 the chain is on the cytoplasmic side; it reads RRQELRRTLKEGLTCSW. Residue Cys315 is the site of S-palmitoyl cysteine attachment.

The protein belongs to the G-protein coupled receptor 1 family. In terms of assembly, interacts with MGRN1, but does not undergo MGRN1-mediated ubiquitination; this interaction competes with GNAS-binding and thus inhibits agonist-induced cAMP production. Interacts with OPN3; the interaction results in a decrease in MC1R-mediated cAMP signaling and ultimately a decrease in melanin production in melanocytes.

It localises to the cell membrane. Receptor for MSH (alpha, beta and gamma) and ACTH. The activity of this receptor is mediated by G proteins which activate adenylate cyclase. Mediates melanogenesis, the production of eumelanin (black/brown) and phaeomelanin (red/yellow), via regulation of cAMP signaling in melanocytes. The chain is Melanocyte-stimulating hormone receptor (MC1R) from Hylobates muelleri (Mueller's Bornean gibbon).